The following is a 362-amino-acid chain: MATVTDLPDDLVREIFSRVPLTSLRAVRSTCKKWNAISKYDILGKKAAAKNQFLEFMVTDSRVCSLRLDLQGIRSEEDLIDLSIKQISIPNKVDQVEISQVYHCDGLLLCIAKDNSSVMVWNPYLGQTKLIQPRKKLHRYDKFALGYDNNRNHKILRFLYEGSPRNVIIDVYDFSSDSWRVLDIDIDWHELFSHNSVSLKGNTYFFGRKGPRLPMLFKPPSRRFEYLTLSCVRNEKLAVLYSHLNRFGTIEICISTKIDPSAVSWTTFLRIDMTLINGLPDNFFVHSYATSFFFDEEKKVAVLFGTNRYRGRETCQYYQRACIVGDSGYFKAVNIELVFNSQLQSCQLVSSSYVPSLVQLQD.

The F-box domain maps to 1 to 47 (MATVTDLPDDLVREIFSRVPLTSLRAVRSTCKKWNAISKYDILGKKA).

The polypeptide is F-box protein At1g54550 (Arabidopsis thaliana (Mouse-ear cress)).